Here is a 581-residue protein sequence, read N- to C-terminus: Proline--tRNA ligase (581 aa).

Belongs to the class-II aminoacyl-tRNA synthetase family. ProS type 1 subfamily. In terms of assembly, homodimer.

The protein resides in the cytoplasm. It carries out the reaction tRNA(Pro) + L-proline + ATP = L-prolyl-tRNA(Pro) + AMP + diphosphate. Functionally, catalyzes the attachment of proline to tRNA(Pro) in a two-step reaction: proline is first activated by ATP to form Pro-AMP and then transferred to the acceptor end of tRNA(Pro). As ProRS can inadvertently accommodate and process non-cognate amino acids such as alanine and cysteine, to avoid such errors it has two additional distinct editing activities against alanine. One activity is designated as 'pretransfer' editing and involves the tRNA(Pro)-independent hydrolysis of activated Ala-AMP. The other activity is designated 'posttransfer' editing and involves deacylation of mischarged Ala-tRNA(Pro). The misacylated Cys-tRNA(Pro) is not edited by ProRS. This chain is Proline--tRNA ligase, found in Polaromonas naphthalenivorans (strain CJ2).